The sequence spans 113 residues: Cell division protein FtsB (113 aa).

Topologically, residues 1 to 3 (MRL) are cytoplasmic. The chain crosses the membrane as a helical span at residues 4 to 21 (ISLLLFVLLLAIQYPLWL). Topologically, residues 22-113 (GKGGWLRVWE…PNSPAATGRH (92 aa)) are periplasmic. Residues 34–63 (HQVQEQATRNQMLKLRNAKLEGEVKDLQDG) adopt a coiled-coil conformation. The segment at 93–113 (KVSATPPLPPPPNSPAATGRH) is disordered.

It belongs to the FtsB family. As to quaternary structure, part of a complex composed of FtsB, FtsL and FtsQ.

It is found in the cell inner membrane. Functionally, essential cell division protein. May link together the upstream cell division proteins, which are predominantly cytoplasmic, with the downstream cell division proteins, which are predominantly periplasmic. This chain is Cell division protein FtsB, found in Cupriavidus pinatubonensis (strain JMP 134 / LMG 1197) (Cupriavidus necator (strain JMP 134)).